We begin with the raw amino-acid sequence, 93 residues long: Uteroglobin (93 aa).

A signal peptide spans 1-17 (MKLAITIILVMLSVCYS).

Belongs to the secretoglobin family. Antiparallel homodimer; disulfide-linked. Interaction with LMBR1L is controversial.

The protein localises to the secreted. Its function is as follows. Binds phosphatidylcholine, phosphatidylinositol, polychlorinated biphenyls (PCB) and weakly progesterone, potent inhibitor of phospholipase A2. The polypeptide is Uteroglobin (SCGB1A1) (Neotomodon alstoni (Mexican volcano mouse)).